The following is a 408-amino-acid chain: Exo-alpha-sialidase ARB_03431 (408 aa).

The signal sequence occupies residues Met1–Ala22. Substrate contacts are provided by Arg62, Arg81, Asp87, and Gln150. N-linked (GlcNAc...) asparagine glycosylation occurs at Asn237. Substrate contacts are provided by residues Arg267, Arg324, Arg324–Thr325, Tyr333–Asp334, Lys339, Tyr360, Asp378, and Asp378–Tyr380. The N-linked (GlcNAc...) asparagine glycan is linked to Asn398.

The protein belongs to the glycosyl hydrolase 33 family.

The protein resides in the secreted. It catalyses the reaction Hydrolysis of alpha-(2-&gt;3)-, alpha-(2-&gt;6)-, alpha-(2-&gt;8)- glycosidic linkages of terminal sialic acid residues in oligosaccharides, glycoproteins, glycolipids, colominic acid and synthetic substrates.. Functionally, sialidase is able to release sialic acid from a wide variety of natural substrates. The chain is Exo-alpha-sialidase ARB_03431 from Arthroderma benhamiae (strain ATCC MYA-4681 / CBS 112371) (Trichophyton mentagrophytes).